A 188-amino-acid polypeptide reads, in one-letter code: Transcription factor E (188 aa).

In terms of domain architecture, HTH TFE/IIEalpha-type spans 9 to 98 (DLEVLRDVTL…SWRLNLREVL (90 aa)).

The protein belongs to the TFE family. As to quaternary structure, monomer. Interaction with RNA polymerase subunits RpoF and RpoE is necessary for Tfe stimulatory transcription activity. Able to interact with Tbp and RNA polymerase in the absence of DNA promoter. Interacts both with the preinitiation and elongation complexes.

Its function is as follows. Transcription factor that plays a role in the activation of archaeal genes transcribed by RNA polymerase. Facilitates transcription initiation by enhancing TATA-box recognition by TATA-box-binding protein (Tbp), and transcription factor B (Tfb) and RNA polymerase recruitment. Not absolutely required for transcription in vitro, but particularly important in cases where Tbp or Tfb function is not optimal. It dynamically alters the nucleic acid-binding properties of RNA polymerases by stabilizing the initiation complex and destabilizing elongation complexes. Seems to translocate with the RNA polymerase following initiation and acts by binding to the non template strand of the transcription bubble in elongation complexes. This chain is Transcription factor E, found in Methanopyrus kandleri (strain AV19 / DSM 6324 / JCM 9639 / NBRC 100938).